Here is an 857-residue protein sequence, read N- to C-terminus: Inactive rhomboid protein 1 (857 aa).

Over 1 to 413 (MAELRRDSTS…HRPFFTYWIT (413 aa)) the chain is Cytoplasmic. Residues 283-307 (FESPSDSTMKDVDSKQLDESELTGS) are disordered. Residues 290–300 (TMKDVDSKQLD) show a composition bias toward basic and acidic residues. Residues 414 to 434 (FVHILITILAVCIYGIAPVGF) traverse the membrane as a helical segment. Residues 435 to 661 (SQHETVDSVL…PDQFYRLWLS (227 aa)) lie on the Lumenal side of the membrane. N-linked (GlcNAc...) asparagine glycosylation is present at asparagine 585. A helical transmembrane segment spans residues 662 to 682 (LFLHAGILHCLVSVCFQMTIL). At 683–693 (RDLEKLAGWLR) the chain is on the cytoplasmic side. A helical transmembrane segment spans residues 694–714 (ISIIYILSGITGNLASAIFLP). Topologically, residues 715–716 (YR) are lumenal. Residues 717–737 (AEVGPAGSQFGILACLFVELI) traverse the membrane as a helical segment. At 738–748 (QSWQILAQPWR) the chain is on the cytoplasmic side. A helical transmembrane segment spans residues 749-769 (AFTKLLCVVLFLFAFGLLPWI). Over 770 to 774 (DNFAH) the chain is Lumenal. Residues 775-795 (ISGFISGFFLSFAFLPYISFG) form a helical membrane-spanning segment. The Cytoplasmic segment spans residues 796–805 (RLDMYRKRCQ). Residues 806–826 (IIIFLVVFLGLFAGLVVLFYV) traverse the membrane as a helical segment. At 827-857 (HPIKCEWCELLTCIPFTDKFCEKYDLNAHLH) the chain is on the lumenal side.

The protein belongs to the peptidase S54 family.

Its subcellular location is the endoplasmic reticulum membrane. The protein resides in the golgi apparatus membrane. In terms of biological role, regulates ADAM17 protease, a sheddase of the epidermal growth factor (EGF) receptor ligands and TNF, thereby plays a role in sleep, cell survival, proliferation, migration and inflammation. Does not exhibit any protease activity on its own. The protein is Inactive rhomboid protein 1 (rhbdf1) of Danio rerio (Zebrafish).